We begin with the raw amino-acid sequence, 201 residues long: Superoxide dismutase [Mn] (201 aa).

Mn(2+) is bound by residues His-27, His-81, Asp-163, and His-167.

It belongs to the iron/manganese superoxide dismutase family. As to quaternary structure, homodimer. Mn(2+) is required as a cofactor.

The protein resides in the secreted. The enzyme catalyses 2 superoxide + 2 H(+) = H2O2 + O2. Functionally, destroys superoxide anion radicals which are normally produced within the cells and which are toxic to biological systems. This chain is Superoxide dismutase [Mn] (sodA), found in Streptococcus pyogenes serotype M3 (strain ATCC BAA-595 / MGAS315).